A 208-amino-acid chain; its full sequence is Redox-sensing transcriptional repressor Rex (208 aa).

The H-T-H motif DNA-binding region spans 15–54 (SYYMCLERLLDEGVEVVSSEELARRLDLKASQIRKDLSYF). 89–94 (GAGNIG) lines the NAD(+) pocket.

Belongs to the transcriptional regulatory Rex family. As to quaternary structure, homodimer.

Its subcellular location is the cytoplasm. Functionally, modulates transcription in response to changes in cellular NADH/NAD(+) redox state. The polypeptide is Redox-sensing transcriptional repressor Rex (Thermotoga petrophila (strain ATCC BAA-488 / DSM 13995 / JCM 10881 / RKU-1)).